Here is a 98-residue protein sequence, read N- to C-terminus: MNLERLYKVLLGPVISEKSAVVADKGNQVVFKVVKTATKPEIKAAVEKLFNVNVRDVRVLNVKGKTKRTRFGLGQRSDWKKAYVRLEQGQEIDFAIAE.

Belongs to the universal ribosomal protein uL23 family. Part of the 50S ribosomal subunit. Contacts protein L29, and trigger factor when it is bound to the ribosome.

Its function is as follows. One of the early assembly proteins it binds 23S rRNA. One of the proteins that surrounds the polypeptide exit tunnel on the outside of the ribosome. Forms the main docking site for trigger factor binding to the ribosome. This chain is Large ribosomal subunit protein uL23, found in Saccharophagus degradans (strain 2-40 / ATCC 43961 / DSM 17024).